A 309-amino-acid chain; its full sequence is Probable RuBisCO transcriptional regulator (309 aa).

The HTH lysR-type domain occupies 6–63 (FTLDQLRILKAIVKEGSFKRAADSLYVSQPAISLQIQNLEKQLNIPLFERSNKKATLT). Positions 23–42 (FKRAADSLYVSQPAISLQIQ) form a DNA-binding region, H-T-H motif.

It belongs to the LysR transcriptional regulatory family.

The protein resides in the plastid. It localises to the chloroplast. Functionally, trans-acting transcriptional regulator of RuBisCO genes (rbcL and rbcS) expression. The polypeptide is Probable RuBisCO transcriptional regulator (rbcR) (Gracilaria tenuistipitata var. liui (Red alga)).